A 264-amino-acid polypeptide reads, in one-letter code: DNA-binding HTH-type transcriptional repressor TrmBL2 (264 aa).

Residues 81 to 113 (LEKFIEEWQERVKEELEAKKKAKEELIELMKPL) adopt a coiled-coil conformation.

It belongs to the transcriptional regulator TrmB family.

It is found in the cytoplasm. The protein localises to the chromosome. Its function is as follows. An abundant chromosomal protein that seems to be involved in both genome architecture and transcription repression. Incubation with DNA in vitro gives fibrous structures 14.2 +/- 2.1 nm in thickness (naked DNA is 1.83 +/- 0.37 nm); does not significantly compact DNA. Binds to both coding and non-coding regions; binding within gene promoters correlates with decreased transcript levels, while binding within coding regions does not. The chain is DNA-binding HTH-type transcriptional repressor TrmBL2 from Thermococcus kodakarensis (strain ATCC BAA-918 / JCM 12380 / KOD1) (Pyrococcus kodakaraensis (strain KOD1)).